The sequence spans 236 residues: Exosome complex component Rrp4 (236 aa).

In terms of domain architecture, S1 motif spans 64-133 (GDKVIGKVIE…EIKESWLTLK (70 aa)). The region spanning 141–199 (EGGHMVLIHASRVPRVIGKGGGMVNMVKELTATRIIIGQNGLIWIDGPIEGVTMAIAAI) is the KH domain.

The protein belongs to the RRP4 family. Component of the archaeal exosome complex. Forms a trimer of Rrp4 and/or Csl4 subunits. The trimer associates with a hexameric ring-like arrangement composed of 3 Rrp41-Rrp42 heterodimers.

Its subcellular location is the cytoplasm. In terms of biological role, non-catalytic component of the exosome, which is a complex involved in RNA degradation. Increases the RNA binding and the efficiency of RNA degradation. Confers strong poly(A) specificity to the exosome. In Thermoplasma acidophilum (strain ATCC 25905 / DSM 1728 / JCM 9062 / NBRC 15155 / AMRC-C165), this protein is Exosome complex component Rrp4.